The following is a 440-amino-acid chain: Thymidine phosphorylase (440 aa).

The protein belongs to the thymidine/pyrimidine-nucleoside phosphorylase family. Homodimer.

It carries out the reaction thymidine + phosphate = 2-deoxy-alpha-D-ribose 1-phosphate + thymine. Its pathway is pyrimidine metabolism; dTMP biosynthesis via salvage pathway; dTMP from thymine: step 1/2. Its function is as follows. The enzymes which catalyze the reversible phosphorolysis of pyrimidine nucleosides are involved in the degradation of these compounds and in their utilization as carbon and energy sources, or in the rescue of pyrimidine bases for nucleotide synthesis. The sequence is that of Thymidine phosphorylase from Salmonella paratyphi A (strain ATCC 9150 / SARB42).